Consider the following 180-residue polypeptide: Adenine phosphoribosyltransferase (180 aa).

This sequence belongs to the purine/pyrimidine phosphoribosyltransferase family. As to quaternary structure, homodimer.

It localises to the cytoplasm. The catalysed reaction is AMP + diphosphate = 5-phospho-alpha-D-ribose 1-diphosphate + adenine. It participates in purine metabolism; AMP biosynthesis via salvage pathway; AMP from adenine: step 1/1. In terms of biological role, catalyzes a salvage reaction resulting in the formation of AMP, that is energically less costly than de novo synthesis. The protein is Adenine phosphoribosyltransferase of Agrobacterium fabrum (strain C58 / ATCC 33970) (Agrobacterium tumefaciens (strain C58)).